The primary structure comprises 224 residues: 7-cyano-7-deazaguanine synthase 1 (224 aa).

10–20 lines the ATP pocket; the sequence is LSGGLDSMVCA. The Zn(2+) site is built by C189, C199, C202, and C205.

It belongs to the QueC family. Zn(2+) is required as a cofactor.

It catalyses the reaction 7-carboxy-7-deazaguanine + NH4(+) + ATP = 7-cyano-7-deazaguanine + ADP + phosphate + H2O + H(+). It functions in the pathway purine metabolism; 7-cyano-7-deazaguanine biosynthesis. Its function is as follows. Catalyzes the ATP-dependent conversion of 7-carboxy-7-deazaguanine (CDG) to 7-cyano-7-deazaguanine (preQ(0)). This is 7-cyano-7-deazaguanine synthase 1 from Sphingopyxis alaskensis (strain DSM 13593 / LMG 18877 / RB2256) (Sphingomonas alaskensis).